The chain runs to 734 residues: Vacuolar transporter chaperone complex subunit 2 (734 aa).

The 144-residue stretch at 1-144 (MRFSDSIEAG…PGYSLRPVFQ (144 aa)) folds into the SPX domain. Over 1–624 (MRFSDSIEAG…EAKVWLANER (624 aa)) the chain is Cytoplasmic. The tract at residues 125–132 (KIVKKHDK) is important for inositol polyphosphate binding. Serine 181 is subject to Phosphoserine. Threonine 529 carries the phosphothreonine modification. Tyrosine 583 bears the Phosphotyrosine mark. Residues 625–645 (TFLKWLHVVVLLGSLALALYN) traverse the membrane as a helical segment. Topologically, residues 646-650 (SAGER) are vacuolar. The chain crosses the membrane as a helical span at residues 651–671 (LGQAFGVVYTLLAIFIGFYAW). Topologically, residues 672-693 (KLHAKRSQMIKSRSPAPMTDYW) are cytoplasmic. A helical membrane pass occupies residues 694-714 (GPLIVGTALAISLIVNMSFAL). Over 715–734 (KDAVYQNLIEPDRLLVKLFT) the chain is Vacuolar.

The protein belongs to the VTC2/3 family. The VTC core complex is an integral membrane heterooligomer composed of at least the catalytic subunit vtc4 and the accessory subunits vtc1 and vtc2. vtc1 is a small membrane protein without hydrophilic domain. Vtc2 and vtc4 are related and have 2 hydrophilic domains that face the cytosol, an N-terminal SPX domain and the central core domain. The central core in vtc4 is the catalytic domain.

Its subcellular location is the vacuole membrane. Functionally, accessory subunit of the vacuolar transporter chaperone (VTC) complex. The VTC complex acts as a vacuolar polyphosphate polymerase that catalyzes the synthesis of inorganic polyphosphate (polyP) via transfer of phosphate from ATP to a growing polyP chain, releasing ADP. VTC exposes its catalytic domain vtc4 to the cytosol, where the growing polyP chain winds through a tunnel-shaped pocket, integrating cytoplasmic polymer synthesis with polyP membrane translocation. The VTC complex carries 9 vacuolar transmembrane domains, which are likely to constitute the translocation channel into the organelle lumen. PolyP synthesis is tightly coupled to its transport into the vacuole lumen, in order to avoid otherwise toxic intermediates in the cytosol, and it depends on the proton gradient across the membrane, formed by V-ATPase. The VTC complex also plays a role in vacuolar membrane fusion. This chain is Vacuolar transporter chaperone complex subunit 2 (vtc2), found in Schizosaccharomyces pombe (strain 972 / ATCC 24843) (Fission yeast).